Here is an 87-residue protein sequence, read N- to C-terminus: RNA-binding protein Hfq (87 aa).

The Sm domain maps to 9 to 68 (DPYLNVLRKERIPVSIYLVNGIKLQGQVESFDQFVVLLKNTVSQMVYKHAISTVVPSRPV).

This sequence belongs to the Hfq family. In terms of assembly, homohexamer.

RNA chaperone that binds small regulatory RNA (sRNAs) and mRNAs to facilitate mRNA translational regulation in response to envelope stress, environmental stress and changes in metabolite concentrations. Also binds with high specificity to tRNAs. In Teredinibacter turnerae (strain ATCC 39867 / T7901), this protein is RNA-binding protein Hfq.